Here is a 42-residue protein sequence, read N- to C-terminus: Photosystem I reaction center subunit IX (42 aa).

Residues 7 to 27 form a helical membrane-spanning segment; it reads YLSTAPVLAAVWFTVLAGILI.

This sequence belongs to the PsaJ family.

It is found in the plastid. The protein resides in the chloroplast thylakoid membrane. In terms of biological role, may help in the organization of the PsaE and PsaF subunits. In Ostreococcus tauri, this protein is Photosystem I reaction center subunit IX.